Consider the following 133-residue polypeptide: ATP synthase epsilon chain, chloroplastic (133 aa).

This sequence belongs to the ATPase epsilon chain family. As to quaternary structure, F-type ATPases have 2 components, CF(1) - the catalytic core - and CF(0) - the membrane proton channel. CF(1) has five subunits: alpha(3), beta(3), gamma(1), delta(1), epsilon(1). CF(0) has three main subunits: a, b and c.

The protein resides in the plastid. It is found in the chloroplast thylakoid membrane. Produces ATP from ADP in the presence of a proton gradient across the membrane. The chain is ATP synthase epsilon chain, chloroplastic from Phaeodactylum tricornutum (strain CCAP 1055/1).